Here is a 967-residue protein sequence, read N- to C-terminus: MTIAVKESKILYGNFDKAKSGIMKGSGGIVEQGPGLQQRIITPAKEMPPEIPHVEFNQLPLSVLIRNLTVYAAKELSQYMKTNVRSTQDASTRKMEFLRLIIFLRNQFLRLYVLVKWCKTIRQNNFHTMIDLLNWFRGTNIIVNNCLLALKDMSTSMAGAKLPNPDLITALEVLMLGRPDLPTHGFLLTGDENGQQANKIPAKLILKRFRDLNTCLSVKISLMDLPAEMHTYSIKDGRITFTVFPEFEISLSTIDRESPLFFVDVKFLFNENKFPLNTTKIALLVNDILYKSPTPLLSLYQFLHRYVLTLQLYMIHVELQDIETNGKYSGGNLAHHYDPKKNIISLRYWLQSKMNSKCKALIGVEKTSQSIILQWHLPDTKEEGKTTKYNNLLGNIEAILDEITFNHARIIMSELLDTGLFEGDDNKNDTSDTLFFHVPVICVATAPVQLKINTISGIFYFKNPSALLLSYAKQLNQTSDLDDVVNILERLRMDKIVHILRNMFEKTGWICEDVVKLNKPILYDKHKDKKRILTRDLFIRIKDWPANWFFILNLVASGATCIVEKLIGKVQSVKGTWEVKYLDQGNLQVSKLESITYQNVMHMQKTIIQKILNHMIIDSLNELKISKVICQGEASQKLPAYVQTNTAGASNVSIIAIGLESFLQGSKALSDTLESTIFLKMDYEQNEVKLFGKFKKDTQMIRYQCDDLLINFIDKRGLAFHMTEDFTSLNHVVQYLTKFRQKLMQLVVLTDVTEKLHNNFRSEHFQIVKLRPNEISFRYLKNSKDDQDCTIQIVTNETKIEKLQVQLSPLNPQNIIQKYLECDKYDPHFIFNYLHFTSKLFSAVKSIESITNTNTMTITLHLHTLAAYQLSYHDRLTGGQIALCIDLRNSPSRAGSMYHLYFAQEDYSASKNPMYPAILQVINNVFMLNNNTKRKVPSVIRLGTGVACPLGDIEPLLEEIHSILIRS.

It belongs to the Mediator complex subunit 14 family. In terms of assembly, component of the Mediator complex.

It is found in the nucleus. Component of the Mediator complex, a coactivator involved in the regulated transcription of nearly all RNA polymerase II-dependent genes. Mediator functions as a bridge to convey information from gene-specific regulatory proteins to the basal RNA polymerase II transcription machinery. Mediator is recruited to promoters by direct interactions with regulatory proteins and serves as a scaffold for the assembly of a functional preinitiation complex with RNA polymerase II and the general transcription factors. The chain is Mediator of RNA polymerase II transcription subunit 14 (RGR1) from Eremothecium gossypii (strain ATCC 10895 / CBS 109.51 / FGSC 9923 / NRRL Y-1056) (Yeast).